We begin with the raw amino-acid sequence, 215 residues long: Sodium channel regulatory subunit beta-3 (215 aa).

The first 22 residues, 1–22 (MPAFNRLFPLVSLVLIYWASVC), serve as a signal peptide directing secretion. Residues 23–156 (FPVCVEVPSE…EEAGEDFTSV (134 aa)) are Extracellular-facing. An Ig-like C2-type domain is found at 24–138 (PVCVEVPSET…EAHRPFVKTT (115 aa)). Intrachain disulfides connect Cys26–Cys48 and Cys45–Cys120. N-linked (GlcNAc...) asparagine glycosylation is found at Asn95, Asn109, Asn113, and Asn121. The helical transmembrane segment at 157 to 178 (VSEIMMYILLVFLTLWLLIEMI) threads the bilayer. Residues 179–215 (YCYRKVSKAEEAAQENASDYLAIPSENKENSAVPVEE) are Cytoplasmic-facing.

This sequence belongs to the sodium channel auxiliary subunit SCN3B (TC 8.A.17) family. In terms of assembly, a voltage-gated sodium (Nav) channel consists of an ion-conducting pore-forming alpha subunit functional on its own that is regulated by one or more beta subunits. Forms homodimers and homotrimers. SCN3B is non-covalently associated with alpha subunits and induces the formation of alpha subunit oligomers, including trimers. Interacts with SCN5A/Nav1.5; regulatory subunit of SCN5A/Nav1.5. Interacts with SCN7A/Nav2.1; probable regulatory subunit of SCN7A/Nav2.1. Interacts with SCN10A; regulatory subunit of SCN10A/Nav1.8. Interacts with NFASC; probably involved in targeting the sodium channels to the nodes of Ranvier. Post-translationally, intramolecular disulfide bonds favor the voltage-gated sodium channel oligomeric complex assembly. In terms of processing, N-glycosylated.

The protein resides in the cell membrane. Functionally, regulatory subunit of multiple voltage-gated sodium (Nav) channels directly mediating the depolarization of excitable membranes. Navs, also called VGSCs (voltage-gated sodium channels) or VDSCs (voltage-dependent sodium channels), operate by switching between closed and open conformations depending on the voltage difference across the membrane. In the open conformation they allow Na(+) ions to selectively pass through the pore, along their electrochemical gradient. The influx of Na+ ions provokes membrane depolarization, initiating the propagation of electrical signals throughout cells and tissues. The accessory beta subunits participate in localization and functional modulation of the Nav channels. Modulates the activity of SCN2A/Nav1.2, causing a hyperpolarizing shift in the voltage-dependence of inactivation of the channel and increasing the fraction of channels operating in the fast gating mode. Modulates the activity of SCN5A/Nav1.5. Could also regulate the atypical sodium channel SCN7A/Nav2.1. Modulates the activity of SCN10A/Nav1.8, regulating its oligomerization and accelerating the recovery from inactivation. The polypeptide is Sodium channel regulatory subunit beta-3 (Macaca fascicularis (Crab-eating macaque)).